A 28-amino-acid chain; its full sequence is Cruzioseptin-3 (28 aa).

Residue Gln25 is modified to Glutamine amide. A propeptide spanning residues Glu27–Gln28 is cleaved from the precursor.

In terms of tissue distribution, expressed by the skin glands.

It localises to the secreted. In terms of biological role, has antimicrobial activity against Gram-negative bacterium E.coli (MIC=13.32 uM), against Gram-positive bacterium S.aureus (MIC=13.32 uM) and against fungus C.albicans (MIC=13.32 uM). At higher concentrations also has a bactericidal and fungicidal effect. Has hemagglutinating activity against horse erythrocytes. In Cruziohyla calcarifer (Splendid leaf frog), this protein is Cruzioseptin-3.